Consider the following 198-residue polypeptide: Nucleoid occlusion factor SlmA (198 aa).

Residues Arg-9–Leu-70 form the HTH tetR-type domain. Residues Thr-33–Phe-52 constitute a DNA-binding region (H-T-H motif). A coiled-coil region spans residues Asp-119 to Lys-144.

Belongs to the nucleoid occlusion factor SlmA family. In terms of assembly, homodimer. Interacts with FtsZ.

It localises to the cytoplasm. The protein localises to the nucleoid. Functionally, required for nucleoid occlusion (NO) phenomenon, which prevents Z-ring formation and cell division over the nucleoid. Acts as a DNA-associated cell division inhibitor that binds simultaneously chromosomal DNA and FtsZ, and disrupts the assembly of FtsZ polymers. SlmA-DNA-binding sequences (SBS) are dispersed on non-Ter regions of the chromosome, preventing FtsZ polymerization at these regions. The chain is Nucleoid occlusion factor SlmA from Sodalis glossinidius (strain morsitans).